A 120-amino-acid polypeptide reads, in one-letter code: Chaperonin GroEL (120 aa).

23–27 (DGTTT) is a binding site for ATP.

This sequence belongs to the chaperonin (HSP60) family. As to quaternary structure, forms a cylinder of 14 subunits composed of two heptameric rings stacked back-to-back. Interacts with the co-chaperonin GroES.

The protein localises to the cytoplasm. The catalysed reaction is ATP + H2O + a folded polypeptide = ADP + phosphate + an unfolded polypeptide.. Its function is as follows. Together with its co-chaperonin GroES, plays an essential role in assisting protein folding. The GroEL-GroES system forms a nano-cage that allows encapsulation of the non-native substrate proteins and provides a physical environment optimized to promote and accelerate protein folding. The chain is Chaperonin GroEL from Mycobacterium intracellulare.